Reading from the N-terminus, the 166-residue chain is Replication restart protein DnaT (166 aa).

Belongs to the DnaT family. In terms of assembly, homooligomerizes. Interacts with PriB. Component of the replication restart primosome. Primosome assembly occurs via a 'hand-off' mechanism. PriA binds to replication forks, subsequently PriB then DnaT bind; DnaT then displaces ssDNA to generate the helicase loading substrate.

Functionally, involved in the restart of stalled replication forks, which reloads the replicative helicase on sites other than the origin of replication. Can function in multiple replication restart pathways. Displaces ssDNA from a PriB-ssDNA complex. Probably forms a spiral filament on ssDNA. The protein is Replication restart protein DnaT of Buchnera aphidicola subsp. Schizaphis graminum (strain Sg).